We begin with the raw amino-acid sequence, 439 residues long: GTPase Der (439 aa).

2 consecutive EngA-type G domains span residues 2-168 and 181-357; these read ATVL…EEKG and IKVA…ASYT. Residues 8–15, 55–59, 118–121, 187–194, 234–238, and 300–303 each bind GTP; these read GKPNVGKS, DTCGV, NKAE, GRPNVGKS, DTAGL, and NKWD. The KH-like domain maps to 358-439; the sequence is TKVPSSAINS…PIFLKFKRSR (82 aa).

Belongs to the TRAFAC class TrmE-Era-EngA-EngB-Septin-like GTPase superfamily. EngA (Der) GTPase family. As to quaternary structure, associates with the 50S ribosomal subunit.

Functionally, GTPase that plays an essential role in the late steps of ribosome biogenesis. This is GTPase Der from Thermotoga sp. (strain RQ2).